The primary structure comprises 235 residues: Probable RNA 2'-phosphotransferase (235 aa).

This sequence belongs to the KptA/TPT1 family.

Functionally, removes the 2'-phosphate from RNA via an intermediate in which the phosphate is ADP-ribosylated by NAD followed by a presumed transesterification to release the RNA and generate ADP-ribose 1''-2''-cyclic phosphate (APPR&gt;P). May function as an ADP-ribosylase. This is Probable RNA 2'-phosphotransferase from Thermoplasma volcanium (strain ATCC 51530 / DSM 4299 / JCM 9571 / NBRC 15438 / GSS1).